A 514-amino-acid polypeptide reads, in one-letter code: Myocyte-specific enhancer factor 2D (514 aa).

Positions Arg3–Tyr57 constitute an MADS-box domain. Residues Ala58 to Glu86 constitute a DNA-binding region (mef2-type). Asp97, Ser98, and Ser106 each carry phosphoserine. The residue at position 107 (Leu107) is a Phosphothreonine. Ser110 is modified (phosphoserine). A Phosphoserine; by PKA modification is found at Ser121. The interval Thr174–Gly207 is disordered. At Ser180 the chain carries Phosphoserine; by MAPK7. Residues Ser180–Ser192 show a composition bias toward polar residues. Ser190 carries the phosphoserine; by PKA modification. Ser231 carries the phosphoserine modification. The segment at Asn244–Asp269 is disordered. Residue Lys245 is modified to N6-acetyllysine. Ser251 carries the post-translational modification Phosphoserine. The beta domain stretch occupies residues Thr286–Leu292. Disordered stretches follow at residues Trp364–His399 and Ser430–Lys514. The span at Pro367–Gln396 shows a compositional bias: pro residues. An N6-acetyllysine; alternate modification is found at Lys432. Lys432 is covalently cross-linked (Glycyl lysine isopeptide (Lys-Gly) (interchain with G-Cter in SUMO); alternate). Ser437 bears the Phosphoserine mark.

Belongs to the MEF2 family. In terms of assembly, forms a complex with class II HDACs in undifferentiating cells. On myogenic differentiation, HDACs are released into the cytoplasm allowing MEF2s to interact with other proteins for activation. Interacts with HDAC4 (in undifferentiating cells); the interaction translocates MEF2D to nuclear dots. Forms a heterodimer with MEF2A. Interacts with MAPK7; the interaction phosphorylates but does not activate MEF2D. Interacts with MYOG. Interacts with CCAR2 and HDAC3. Phosphorylated on Ser-437 is which is required for Lys-432 sumoylation and inhibits transcriptional activity. Phosphorylation on this residue by CDK5 is dependent on p35 and calpains. Phosphorylated by PKA at Ser-121 and Ser-190 represses transcriptional activity in embryonic and postnatal skeletal muscle, and stabilizes protein levels. No in vitro phosphorylation by PKA on Thr-20. Phosphorylated and activated by CaMK4. In terms of processing, acetylated on Lys-432 by CREBBP. Acetylated by EP300. Deacetylated by SIRT1 and HDAC3. Post-translationally, sumoylated on Lys-432 with SUMO2 but not SUMO1; which inhibits transcriptional activity and myogenic activity. Desumoylated by SENP3. Proteolytically cleaved in cerebellar granule neurons by caspase 7 following neurotoxicity. Preferentially cleaves the CDK5-mediated hyperphosphorylated form which leads to neuron apoptosis and transcriptional inactivation. In terms of tissue distribution, widely expressed though mainly restricted to skeletal and cardiac muscle, brain, neurons and lymphocytes. Differentially expressed depending on if isoforms contain the beta domain or not, with the total expression of the beta domain-lacking isoforms vastly exceeding that of the beta domain-containing isoforms. Isoforms containing the beta domain are expressed primarily in skeletal and cardiac muscle and in brain. Also present in lung and testis. Splicing to include the beta domain is induced in differentiating myocytes. Isoforms lacking the beta domain are expressed less abundantly in skeletal muscle, brain and lymphocytes, and are uniquely found in ovary, liver, spleen and kidney. In embryos, the beta domain-containing and beta domain-lacking isoforms are equally expressed. Also expressed cerebellar granule neurons and other regions of the CNS. Highest levels in the olfactory bulb, cortex, hippocampus, thalamus and cerebellum.

It localises to the nucleus. Transcriptional activator which binds specifically to the MEF2 element, 5'-YTA[AT](4)TAR-3', found in numerous muscle-specific, growth factor- and stress-induced genes. Mediates cellular functions not only in skeletal and cardiac muscle development, but also in neuronal differentiation and survival. Plays diverse roles in the control of cell growth, survival and apoptosis via p38 MAPK signaling in muscle-specific and/or growth factor-related transcription. Plays a critical role in the regulation of neuronal apoptosis. The polypeptide is Myocyte-specific enhancer factor 2D (Mef2d) (Mus musculus (Mouse)).